The chain runs to 298 residues: ADP/ATP translocase 1 (298 aa).

The Mitochondrial intermembrane portion of the chain corresponds to 1–7 (MGDQALS). Glycine 2 is modified (N-acetylglycine). Residues 6 to 98 (LSFLKDFLAG…FAFKDKYKQI (93 aa)) form a Solcar 1 repeat. Serine 7 is subject to Phosphoserine. The helical transmembrane segment at 8 to 37 (FLKDFLAGGIAAAVSKTAVAPIERVKLLLQ) threads the bilayer. Topologically, residues 38–74 (VQHASKQISAEKQYKGIIDCVVRIPKEQGFLSFWRGN) are mitochondrial matrix. An N6,N6,N6-trimethyllysine modification is found at lysine 52. A helical membrane pass occupies residues 75 to 99 (LANVIRYFPTQALNFAFKDKYKQIF). Residues arginine 80 and lysine 92 each contribute to the ADP site. Topologically, residues 100 to 109 (LGGVDRHKQF) are mitochondrial intermembrane. Residues 110–130 (WRYFAGNLASGGAAGATSLCF) form a helical membrane-spanning segment. Solcar repeat units follow at residues 111–201 (RYFA…AKGM) and 212–297 (VSWM…IKKY). Residues 131-178 (VYPLDFARTRLAADVGKGSSQREFNGLGDCLTKIFKSDGLKGLYQGFS) lie on the Mitochondrial matrix side of the membrane. At lysine 147 the chain carries N6-succinyllysine. Phosphoserine is present on residues serine 149 and serine 150. The residue at position 160 (cysteine 160) is an S-nitrosocysteine. A helical transmembrane segment spans residues 179–199 (VSVQGIIIYRAAYFGVYDTAK). Over 200-210 (GMLPDPKNVHI) the chain is Mitochondrial intermembrane. Residues 211-231 (IVSWMIAQSVTAVAGLVSYPF) form a helical membrane-spanning segment. Over 232-273 (DTVRRRMMMQSGRKGADIMYTGTVDCWRKIAKDEGRKAFFKG) the chain is Mitochondrial matrix. Arginine 235 serves as a coordination point for ADP. Positions 235-240 (RRRMMM) are important for transport activity. A Nucleotide carrier signature motif motif is present at residues 235–240 (RRRMMM). Residues lysine 245 and lysine 272 each carry the N6-succinyllysine modification. A helical transmembrane segment spans residues 274–291 (AWSNVLRGMGGAFVLVLY). Residues 292–298 (DEIKKYV) are Mitochondrial intermembrane-facing.

Belongs to the mitochondrial carrier (TC 2.A.29) family. Monomer. Found in a complex with ARL2, ARL2BP and SLC25A4/ANT1. Interacts with ARL2BP. Interacts with TIMM44; leading to inhibit the presequence translocase TIMM23, thereby promoting stabilization of PINK1. Post-translationally, under cell death induction, transglutaminated by TGM2. Transglutamination leads to formation of covalent cross-links between a glutamine and the epsilon-amino group of a lysine residue, forming polymers.

The protein localises to the mitochondrion inner membrane. It is found in the membrane. The enzyme catalyses ADP(in) + ATP(out) = ADP(out) + ATP(in). It carries out the reaction H(+)(in) = H(+)(out). Its activity is regulated as follows. The matrix-open state (m-state) is inhibited by the membrane-permeable bongkrekic acid (BKA). The cytoplasmic-open state (c-state) is inhibited by the membrane-impermeable toxic inhibitor carboxyatractyloside (CATR). Proton transporter activity is inhibited by ADP:ATP antiporter activity. Its function is as follows. ADP:ATP antiporter that mediates import of ADP into the mitochondrial matrix for ATP synthesis, and export of ATP out to fuel the cell. Cycles between the cytoplasmic-open state (c-state) and the matrix-open state (m-state): operates by the alternating access mechanism with a single substrate-binding site intermittently exposed to either the cytosolic (c-state) or matrix (m-state) side of the inner mitochondrial membrane. In addition to its ADP:ATP antiporter activity, also involved in mitochondrial uncoupling and mitochondrial permeability transition pore (mPTP) activity. Plays a role in mitochondrial uncoupling by acting as a proton transporter: proton transport uncouples the proton flows via the electron transport chain and ATP synthase to reduce the efficiency of ATP production and cause mitochondrial thermogenesis. Proton transporter activity is inhibited by ADP:ATP antiporter activity, suggesting that SLC25A4/ANT1 acts as a master regulator of mitochondrial energy output by maintaining a delicate balance between ATP production (ADP:ATP antiporter activity) and thermogenesis (proton transporter activity). Proton transporter activity requires free fatty acids as cofactor, but does not transport it. Also plays a key role in mPTP opening, a non-specific pore that enables free passage of the mitochondrial membranes to solutes of up to 1.5 kDa, and which contributes to cell death. It is however unclear if SLC25A4/ANT1 constitutes a pore-forming component of mPTP or regulates it. Acts as a regulator of mitophagy independently of ADP:ATP antiporter activity: promotes mitophagy via interaction with TIMM44, leading to inhibit the presequence translocase TIMM23, thereby promoting stabilization of PINK1. This Rattus norvegicus (Rat) protein is ADP/ATP translocase 1.